The sequence spans 349 residues: Methylthioribose-1-phosphate isomerase (349 aa).

Substrate-binding positions include 49 to 51 (RGA), R92, and Q199. The Proton donor role is filled by D240. 250–251 (NK) contributes to the substrate binding site.

Belongs to the eIF-2B alpha/beta/delta subunits family. MtnA subfamily.

It catalyses the reaction 5-(methylsulfanyl)-alpha-D-ribose 1-phosphate = 5-(methylsulfanyl)-D-ribulose 1-phosphate. Its pathway is amino-acid biosynthesis; L-methionine biosynthesis via salvage pathway; L-methionine from S-methyl-5-thio-alpha-D-ribose 1-phosphate: step 1/6. Catalyzes the interconversion of methylthioribose-1-phosphate (MTR-1-P) into methylthioribulose-1-phosphate (MTRu-1-P). The sequence is that of Methylthioribose-1-phosphate isomerase from Syntrophobacter fumaroxidans (strain DSM 10017 / MPOB).